Consider the following 268-residue polypeptide: Tubulin-specific chaperone C (268 aa).

One can recognise a C-CAP/cofactor C-like domain in the interval 98-255 (PAYTTTLKKH…SAFAFEDFDI (158 aa)).

It is found in the cytoplasm. Its subcellular location is the cytoskeleton. Functionally, tubulin-folding protein; involved in the early step of the tubulin folding pathway. The polypeptide is Tubulin-specific chaperone C (CIN2) (Saccharomyces cerevisiae (strain ATCC 204508 / S288c) (Baker's yeast)).